Consider the following 392-residue polypeptide: Alanine racemase 2 (392 aa).

K40 serves as the catalytic Proton acceptor; specific for D-alanine. Position 40 is an N6-(pyridoxal phosphate)lysine (K40). R138 lines the substrate pocket. The active-site Proton acceptor; specific for L-alanine is the Y266. A substrate-binding site is contributed by M314.

The protein belongs to the alanine racemase family. Pyridoxal 5'-phosphate serves as cofactor.

The catalysed reaction is L-alanine = D-alanine. The protein operates within amino-acid biosynthesis; D-alanine biosynthesis; D-alanine from L-alanine: step 1/1. Its function is as follows. Catalyzes the interconversion of L-alanine and D-alanine. May also act on other amino acids. The chain is Alanine racemase 2 (alr2) from Oceanobacillus iheyensis (strain DSM 14371 / CIP 107618 / JCM 11309 / KCTC 3954 / HTE831).